Consider the following 285-residue polypeptide: 2,3,4,5-tetrahydropyridine-2,6-dicarboxylate N-succinyltransferase (285 aa).

Substrate is bound by residues Arg111 and Asp148.

This sequence belongs to the transferase hexapeptide repeat family. Homotrimer.

Its subcellular location is the cytoplasm. The enzyme catalyses (S)-2,3,4,5-tetrahydrodipicolinate + succinyl-CoA + H2O = (S)-2-succinylamino-6-oxoheptanedioate + CoA. Its pathway is amino-acid biosynthesis; L-lysine biosynthesis via DAP pathway; LL-2,6-diaminopimelate from (S)-tetrahydrodipicolinate (succinylase route): step 1/3. This chain is 2,3,4,5-tetrahydropyridine-2,6-dicarboxylate N-succinyltransferase, found in Rhizobium rhizogenes (strain K84 / ATCC BAA-868) (Agrobacterium radiobacter).